The sequence spans 249 residues: 2,3-bisphosphoglycerate-dependent phosphoglycerate mutase (249 aa).

Substrate is bound by residues 7–14 (RHGESEWN), 20–21 (TG), arginine 59, 86–89 (ERHY), lysine 97, 113–114 (RR), and 182–183 (GN). Histidine 8 functions as the Tele-phosphohistidine intermediate in the catalytic mechanism. Residue glutamate 86 is the Proton donor/acceptor of the active site.

This sequence belongs to the phosphoglycerate mutase family. BPG-dependent PGAM subfamily.

The catalysed reaction is (2R)-2-phosphoglycerate = (2R)-3-phosphoglycerate. It functions in the pathway carbohydrate degradation; glycolysis; pyruvate from D-glyceraldehyde 3-phosphate: step 3/5. In terms of biological role, catalyzes the interconversion of 2-phosphoglycerate and 3-phosphoglycerate. The polypeptide is 2,3-bisphosphoglycerate-dependent phosphoglycerate mutase (Lachnoclostridium phytofermentans (strain ATCC 700394 / DSM 18823 / ISDg) (Clostridium phytofermentans)).